Consider the following 620-residue polypeptide: Mitochondrial Rho GTPase 2 (620 aa).

The Cytoplasmic segment spans residues 1 to 594 (MKRDVRILLL…ELHTTSFWLR (594 aa)). The Miro 1 domain occupies 2-168 (KRDVRILLLG…FYYAQKAVLH (167 aa)). 4 residues coordinate GTP: G16, K17, T18, and S19. Residue T18 participates in Mg(2+) binding. P35 and D57 together coordinate Mg(2+). A GTP-binding site is contributed by S59. K96 participates in a covalent cross-link: Glycyl lysine isopeptide (Lys-Gly) (interchain with G-Cter in ubiquitin). N118, K119, D121, A149, and K150 together coordinate GTP. K119 participates in a covalent cross-link: Glycyl lysine isopeptide (Lys-Gly) (interchain with G-Cter in ubiquitin). K164 is covalently cross-linked (Glycyl lysine isopeptide (Lys-Gly) (interchain with G-Cter in ubiquitin)). EF-hand domains lie at 184-219 (ACAQALTRIFRLSDQDMDQALSDQELNAFQTCCFGH) and 304-339 (HGYQFAQRMLEKHDQDRDGALSPAELESLFSVFPGP). Positions 197, 199, 201, 208, 317, 319, 321, and 328 each coordinate Ca(2+). Positions 340–364 (PWGPQLPRHRPHRGRSAAPARVPLP) are disordered. Positions 415–578 (RNVLLCKVLG…FARLATMATF (164 aa)) constitute a Miro 2 domain. Residues G427, G429, K430, and S431 each coordinate GTP. Mg(2+)-binding residues include S431 and E473. GTP contacts are provided by K527, D529, and C558. Residues 595–617 (VALGAVGAAVAAILSFSLYRVLV) traverse the membrane as a helical; Anchor for type IV membrane protein segment. At 618-620 (KSR) the chain is on the mitochondrial intermembrane side.

This sequence belongs to the mitochondrial Rho GTPase family. Homodimer. Interacts with the kinesin-binding proteins TRAK1/OIP106 and TRAK2/GRIF1, forming a link between mitochondria and the trafficking apparatus of the microtubules. Interacts with ARMCX3. Found in a complex with KIF5B, OGT, RHOT1 and TRAK1. Post-translationally, ubiquitinated by PRKN in a PINK1-dependent manner, leading to its degradation.

It localises to the mitochondrion outer membrane. The catalysed reaction is GTP + H2O = GDP + phosphate + H(+). The enzyme catalyses ATP + H2O = ADP + phosphate + H(+). It catalyses the reaction UTP + H2O = UDP + phosphate + H(+). Its function is as follows. Atypical mitochondrial nucleoside-triphosphatase (NTPase) involved in mitochondrial trafficking. Probably involved in control of anterograde transport of mitochondria and their subcellular distribution. Can hydrolyze GTP, ATP and UTP. The sequence is that of Mitochondrial Rho GTPase 2 (RHOT2) from Sus scrofa (Pig).